The chain runs to 539 residues: Propionyl-CoA carboxylase beta chain, mitochondrial (539 aa).

The N-terminal 28 residues, 1-28 (MAAALRVAAVGARLSVLASGLRAAVRSL), are a transit peptide targeting the mitochondrion. In terms of domain architecture, CoA carboxyltransferase N-terminal spans 32–290 (ATSVNERIEN…SSQDPAPVRE (259 aa)). Residues 32 to 533 (ATSVNERIEN…SKKVQRPWRK (502 aa)) are carboxyltransferase. Position 71 is a phosphoserine (Ser71). Lys99 is modified (N6-acetyllysine; alternate). Lys99 carries the post-translational modification N6-succinyllysine; alternate. Lys248 bears the N6-succinyllysine mark. The CoA carboxyltransferase C-terminal domain maps to 294 to 533 (PSDRLVPELD…SKKVQRPWRK (240 aa)). The tract at residues 325–358 (DEREFFEIMPNYAKNIIVGFARMNGRTVGIVGNQ) is acyl-CoA binding. N6-acetyllysine; alternate occurs at positions 474 and 489. N6-succinyllysine; alternate is present on residues Lys474 and Lys489.

It belongs to the AccD/PCCB family. The holoenzyme is a dodecamer composed of 6 PCCA/alpha subunits and 6 PCCB/beta subunits.

It localises to the mitochondrion matrix. It carries out the reaction propanoyl-CoA + hydrogencarbonate + ATP = (S)-methylmalonyl-CoA + ADP + phosphate + H(+). The enzyme catalyses butanoyl-CoA + hydrogencarbonate + ATP = (2S)-ethylmalonyl-CoA + ADP + phosphate + H(+). It functions in the pathway metabolic intermediate metabolism; propanoyl-CoA degradation; succinyl-CoA from propanoyl-CoA: step 1/3. Its function is as follows. This is one of the 2 subunits of the biotin-dependent propionyl-CoA carboxylase (PCC), a mitochondrial enzyme involved in the catabolism of odd chain fatty acids, branched-chain amino acids isoleucine, threonine, methionine, and valine and other metabolites. Propionyl-CoA carboxylase catalyzes the carboxylation of propionyl-CoA/propanoyl-CoA to D-methylmalonyl-CoA/(S)-methylmalonyl-CoA. Within the holoenzyme, the alpha subunit catalyzes the ATP-dependent carboxylation of the biotin carried by the biotin carboxyl carrier (BCC) domain, while the beta subunit then transfers the carboxyl group from carboxylated biotin to propionyl-CoA. Propionyl-CoA carboxylase also significantly acts on butyryl-CoA/butanoyl-CoA, which is converted to ethylmalonyl-CoA/(2S)-ethylmalonyl-CoA at a much lower rate. Other alternative minor substrates include (2E)-butenoyl-CoA/crotonoyl-CoA. The sequence is that of Propionyl-CoA carboxylase beta chain, mitochondrial from Homo sapiens (Human).